A 530-amino-acid polypeptide reads, in one-letter code: Alpha-(1,3)-fucosyltransferase 4 (530 aa).

2 disordered regions span residues 1 to 48 and 66 to 113; these read MRRL…RAVP and HLGG…TPAD. At 1–147 the chain is on the cytoplasmic side; it reads MRRLWGAARK…GGRRRWRRGR (147 aa). Over residues 88-106 the composition is skewed to basic and acidic residues; it reads ASGERQRRLEPQLQHESRC. The helical; Signal-anchor for type II membrane protein transmembrane segment at 148-172 threads the bilayer; that stretch reads GLPWTVCVLAAAGLTCTALITYACW. The Lumenal portion of the chain corresponds to 173-530; that stretch reads GQLPPLPWAS…IRNLASWFER (358 aa). Residues Asn216 and Asn315 are each glycosylated (N-linked (GlcNAc...) asparagine).

The protein belongs to the glycosyltransferase 10 family.

It localises to the golgi apparatus. Its subcellular location is the golgi stack membrane. It catalyses the reaction a beta-D-galactosyl-(1-&gt;4)-N-acetyl-beta-D-glucosaminyl derivative + GDP-beta-L-fucose = a beta-D-galactosyl-(1-&gt;4)-[alpha-L-fucosyl-(1-&gt;3)]-N-acetyl-beta-D-glucosaminyl derivative + GDP + H(+). The enzyme catalyses an N-acetyl-alpha-neuraminyl-(2-&gt;3)-beta-D-galactosyl-(1-&gt;4)-N-acetyl-beta-D-glucosaminyl derivative + GDP-beta-L-fucose = an alpha-Neu5Ac-(2-&gt;3)-beta-D-Gal-(1-&gt;4)-[alpha-L-Fuc-(1-&gt;3)]-beta-D-GlcNAc derivative + GDP + H(+). It carries out the reaction an alpha-Neu5Ac-(2-&gt;3)-beta-D-Gal-(1-&gt;4)-beta-D-GlcNAc-(1-&gt;3)-beta-D-Gal-(1-&gt;4)-beta-D-GlcNAc derivative + GDP-beta-L-fucose = an alpha-Neu5Ac-(2-&gt;3)-beta-D-Gal-(1-&gt;4)-beta-D-GlcNAc-(1-&gt;3)-beta-D-Gal-(1-&gt;4)-[alpha-L-Fuc-(1-&gt;3)]-beta-D-GlcNAc derivative + GDP + H(+). The catalysed reaction is an alpha-Neu5Ac-(2-&gt;3)-beta-D-Gal-(1-&gt;4)-beta-D-GlcNAc6S derivative + GDP-beta-L-fucose = an alpha-Neu5Ac-(2-&gt;3)-beta-D-Gal-(1-&gt;4)-[alpha-L-Fuc-(1-&gt;3)]-beta-D-GlcNAc6S derivative + GDP + H(+). It functions in the pathway protein modification; protein glycosylation. Its function is as follows. Catalyzes alpha(1-&gt;3) linkage of fucosyl moiety transferred from GDP-beta-L-fucose to N-acetyl glucosamine (GlcNAc) within type 2 lactosamine (LacNAc, Gal-beta(1-&gt;4)GlcNAc) glycan attached to N- or O-linked glycoproteins. Robustly fucosylates nonsialylated distal LacNAc unit of the polylactosamine chain to form Lewis X antigen (CD15), a glycan determinant known to mediate important cellular functions in development and immunity. Fucosylates with lower efficiency sialylated LacNAc acceptors to form sialyl Lewis X and 6-sulfo sialyl Lewis X determinants that serve as recognition epitopes for C-type lectins. Together with FUT7 contributes to SELE, SELL and SELP selectin ligand biosynthesis and selectin-dependent lymphocyte homing, leukocyte migration and blood leukocyte homeostasis. In a cell type specific manner, may also fucosylate the internal LacNAc unit of the polylactosamine chain to form VIM-2 antigen that serves as recognition epitope for SELE. The sequence is that of Alpha-(1,3)-fucosyltransferase 4 (FUT4) from Pan troglodytes (Chimpanzee).